A 349-amino-acid polypeptide reads, in one-letter code: tRNA pseudouridine synthase D (349 aa).

Residue F27 coordinates substrate. The active-site Nucleophile is D80. A substrate-binding site is contributed by N129. Positions 155–303 (GVPNYFGAQR…VEASRRAMLL (149 aa)) constitute a TRUD domain. A substrate-binding site is contributed by F329.

It belongs to the pseudouridine synthase TruD family.

The catalysed reaction is uridine(13) in tRNA = pseudouridine(13) in tRNA. In terms of biological role, responsible for synthesis of pseudouridine from uracil-13 in transfer RNAs. The sequence is that of tRNA pseudouridine synthase D from Salmonella choleraesuis (strain SC-B67).